A 155-amino-acid polypeptide reads, in one-letter code: Ribonuclease H (155 aa).

The region spanning 4–145 (DISKVVIYTD…ADKLAVQGRQ (142 aa)) is the RNase H type-1 domain. Mg(2+) is bound by residues aspartate 13, glutamate 51, aspartate 73, and aspartate 137.

The protein belongs to the RNase H family. Monomer. It depends on Mg(2+) as a cofactor.

Its subcellular location is the cytoplasm. It catalyses the reaction Endonucleolytic cleavage to 5'-phosphomonoester.. Endonuclease that specifically degrades the RNA of RNA-DNA hybrids. The sequence is that of Ribonuclease H from Rickettsia bellii (strain RML369-C).